Here is a 198-residue protein sequence, read N- to C-terminus: RxLR effector protein CRE4 (198 aa).

An N-terminal signal peptide occupies residues 1–20 (MLRSFLLIVATVSLFGQCKP). The RxLR-dEER motif lies at 43 to 52 (RFVRTNDEER).

This sequence belongs to the RxLR effector family.

It localises to the secreted. Its subcellular location is the host cytoplasm. The protein localises to the host nucleus. It is found in the host nucleolus. Its function is as follows. Effector that is involved in host plant infection. Contributes to virulence during the early infection stage, by inhibiting plant defense responses induced by both PAMP-triggered immunity (PTI) and effector-triggered immunity (ETI). This is RxLR effector protein CRE4 (CRE4) from Phytophthora infestans (strain T30-4) (Potato late blight agent).